Here is a 204-residue protein sequence, read N- to C-terminus: Imidazoleglycerol-phosphate dehydratase (204 aa).

The protein belongs to the imidazoleglycerol-phosphate dehydratase family.

It is found in the cytoplasm. The enzyme catalyses D-erythro-1-(imidazol-4-yl)glycerol 3-phosphate = 3-(imidazol-4-yl)-2-oxopropyl phosphate + H2O. The protein operates within amino-acid biosynthesis; L-histidine biosynthesis; L-histidine from 5-phospho-alpha-D-ribose 1-diphosphate: step 6/9. In Rhodococcus erythropolis (strain PR4 / NBRC 100887), this protein is Imidazoleglycerol-phosphate dehydratase.